A 312-amino-acid polypeptide reads, in one-letter code: MANIVFKLSDKDITTLMSRITFDTENLPQGMKARAKYQNTTVNIYQSGKVMFQGNHAEAVSKELLPQHSQLNTNKTKKKNMANSSLEQTLMYDQFNCIGSDEAGSGDYFGPLTVCAAFVTKEHVPILKTLGVDDSKKLTDTKIVELAEQLVAFIPHSLLTLHNDKYNIQQAKGWTQVKMKAVLHNEAIKNVLEKIDSSQLDYIVIDQFAKREVYSHYALSDIPLPKKTKFETKGESKSLAIAVASIISRYAFITYMDQISKYINMTIPKGAGAKVDVIAAKIIKKYGLSRLDTISKKHFKNREKAQKILKPL.

Residues 95-311 enclose the RNase H type-2 domain; sequence FNCIGSDEAG…REKAQKILKP (217 aa). Residues D101, E102, and D206 each contribute to the a divalent metal cation site.

The protein belongs to the RNase HII family. RnhC subfamily. Mn(2+) is required as a cofactor. Requires Mg(2+) as cofactor.

The protein localises to the cytoplasm. The catalysed reaction is Endonucleolytic cleavage to 5'-phosphomonoester.. In terms of biological role, endonuclease that specifically degrades the RNA of RNA-DNA hybrids. The sequence is that of Ribonuclease HIII from Staphylococcus aureus (strain Mu3 / ATCC 700698).